Reading from the N-terminus, the 332-residue chain is Glycerol-3-phosphate dehydrogenase [NAD(P)+] (332 aa).

Positions 13, 34, and 108 each coordinate NADPH. Lys-108, Gly-136, and Ser-138 together coordinate sn-glycerol 3-phosphate. Residue Ala-140 coordinates NADPH. 5 residues coordinate sn-glycerol 3-phosphate: Lys-191, Asp-244, Ser-254, Arg-255, and Asn-256. The active-site Proton acceptor is Lys-191. Residue Arg-255 participates in NADPH binding. Positions 279 and 281 each coordinate NADPH.

It belongs to the NAD-dependent glycerol-3-phosphate dehydrogenase family.

It localises to the cytoplasm. It catalyses the reaction sn-glycerol 3-phosphate + NAD(+) = dihydroxyacetone phosphate + NADH + H(+). The enzyme catalyses sn-glycerol 3-phosphate + NADP(+) = dihydroxyacetone phosphate + NADPH + H(+). Its pathway is membrane lipid metabolism; glycerophospholipid metabolism. In terms of biological role, catalyzes the reduction of the glycolytic intermediate dihydroxyacetone phosphate (DHAP) to sn-glycerol 3-phosphate (G3P), the key precursor for phospholipid synthesis. This Francisella tularensis subsp. novicida (strain U112) protein is Glycerol-3-phosphate dehydrogenase [NAD(P)+].